The primary structure comprises 767 residues: Photosystem I P700 chlorophyll a apoprotein A1 (767 aa).

The next 8 helical transmembrane spans lie at 72-95 (IFSA…FHGA), 158-181 (LMSL…FHYH), 197-221 (LNHH…HVSL), 305-323 (IAHH…GHMY), 364-387 (WHAQ…QHMY), 403-429 (IGLF…IAMI), 451-473 (AIIS…LYVH), and 548-566 (FMVH…LILL). Cysteine 590 and cysteine 599 together coordinate [4Fe-4S] cluster. Helical transmembrane passes span 606–627 (HVFL…HFSW) and 681–703 (TSAY…MFLF). Position 692 (histidine 692) interacts with chlorophyll a'. Positions 700 and 708 each coordinate chlorophyll a. Tryptophan 709 contributes to the phylloquinone binding site. Residues 741 to 761 (AVGVAHYLLGGIATTWAFFHA) form a helical membrane-spanning segment.

Belongs to the PsaA/PsaB family. In terms of assembly, the PsaA/B heterodimer binds the P700 chlorophyll special pair and subsequent electron acceptors. PSI consists of a core antenna complex that captures photons, and an electron transfer chain that converts photonic excitation into a charge separation. The cyanobacterial PSI reaction center is composed of one copy each of PsaA,B,C,D,E,F,I,J,K,L,M and X, and forms trimeric complexes. The cofactor is PSI electron transfer chain: 5 chlorophyll a, 1 chlorophyll a', 2 phylloquinones and 3 4Fe-4S clusters. PSI core antenna: 90 chlorophyll a, 22 carotenoids, 3 phospholipids and 1 galactolipid. P700 is a chlorophyll a/chlorophyll a' dimer, A0 is one or more chlorophyll a, A1 is one or both phylloquinones and FX is a shared 4Fe-4S iron-sulfur center..

It is found in the cellular thylakoid membrane. The enzyme catalyses reduced [plastocyanin] + hnu + oxidized [2Fe-2S]-[ferredoxin] = oxidized [plastocyanin] + reduced [2Fe-2S]-[ferredoxin]. Functionally, psaA and PsaB bind P700, the primary electron donor of photosystem I (PSI), as well as the electron acceptors A0, A1 and FX. PSI is a plastocyanin/cytochrome c6-ferredoxin oxidoreductase, converting photonic excitation into a charge separation, which transfers an electron from the donor P700 chlorophyll pair to the spectroscopically characterized acceptors A0, A1, FX, FA and FB in turn. Oxidized P700 is reduced on the lumenal side of the thylakoid membrane by plastocyanin or cytochrome c6. This Synechococcus sp. (strain CC9311) protein is Photosystem I P700 chlorophyll a apoprotein A1.